A 400-amino-acid chain; its full sequence is MKHIILCIHFLLMVVGLGQAQDCSVAPNMRVNCGYPTVTEADCRAVGCCFDSSILNTKWCFYNATAGPIKKLECSGDPTKRIDCGFPRITEKQCILRGCCFDSSISGVKWCYARTVITTPAPDTTTASTTAETTTVPTTPETTTVPTTPETTTVPTTPETTTVPTTPETTTVPTTPETTTVPTTPETTTVPTTPETTTVPTTPETTTVPTTPETTTVPTTPETTTVPTTPETTTASTTAETTTVPTTPETTTEPTTTPTTDTTPPTLPPTPETTTETTTETTTETTTETTTETTTETTTAPPPECAADRVDCGYSGITQADCEGKGCIFDSTIPETKWCFYTEAEAPARKAECTVDPSVRTDCGYPGITDKECREKGCCYDECIPDVIWCFEKAVPVVNS.

The first 20 residues, 1-20 (MKHIILCIHFLLMVVGLGQA), serve as a signal peptide directing secretion. 2 P-type domains span residues 21 to 64 (QDCS…FYNA) and 72 to 115 (LECS…YART). Disulfide bonds link Cys-23-Cys-49, Cys-33-Cys-48, and Cys-43-Cys-60. N-linked (GlcNAc...) asparagine glycosylation occurs at Asn-63. 3 disulfides stabilise this stretch: Cys-74-Cys-100, Cys-84-Cys-99, and Cys-94-Cys-111. 2 stretches are compositionally biased toward low complexity: residues 122–264 (PDTT…DTTP) and 272–299 (ETTT…ETTT). Positions 122 to 302 (PDTTTASTTA…TTTETTTAPP (181 aa)) are disordered. 14 repeat units span residues 127–135 (ASTTAETTT), 136–144 (VPTTPETTT), 145–153 (VPTTPETTT), 154–162 (VPTTPETTT), 163–171 (VPTTPETTT), 172–180 (VPTTPETTT), 181–189 (VPTTPETTT), 190–198 (VPTTPETTT), 199–207 (VPTTPETTT), 208–216 (VPTTPETTT), 217–225 (VPTTPETTT), 226–234 (VPTTPETTT), 235–243 (ASTTAETTT), and 244–252 (VPTTPETTT). A 15 X 9 AA approximate tandem repeats of [AV]-[SP]-T-T-[AP]-E-T-T-T region spans residues 127–261 (ASTTAETTTV…TEPTTTPTTD (135 aa)). One copy of the 1-15; approximate repeat lies at 253–261 (EPTTTPTTD). A run of 7 repeats spans residues 272–275 (ETTT), 276–279 (ETTT), 280–283 (ETTT), 284–287 (ETTT), 288–291 (ETTT), 292–295 (ETTT), and 296–299 (ETTT). A 7 X 4 AA repeats of E-T-T-T region spans residues 272-299 (ETTTETTTETTTETTTETTTETTTETTT). 2 consecutive P-type domains span residues 298 to 343 (TTAP…FYTE) and 351 to 394 (AECT…FEKA). 5 disulfides stabilise this stretch: Cys-312–Cys-327, Cys-322–Cys-339, Cys-353–Cys-379, Cys-363–Cys-378, and Cys-373–Cys-390.

Post-translationally, extensively O-glycosylated. Consist of about 70% carbohydrate and 30% protein. In terms of tissue distribution, expressed and stored exclusively in mature mucous glands of the skin.

The protein localises to the secreted. In terms of biological role, could be involved in defense against microbial infections. Protects the epithelia from external environment. The polypeptide is Integumentary mucin A.1 (Xenopus laevis (African clawed frog)).